The primary structure comprises 142 residues: Cellulose/chitin binding protein BQ2027_MB2009 (142 aa).

The first 37 residues, 1 to 37, serve as a signal peptide directing secretion; that stretch reads MAGLNIYVRRWRTALHATVSALIVAILGLAITPVASA. The region spanning 38-142 is the CBM2 domain; that stretch reads ATARATLSVT…CLLNGQYPCT (105 aa).

It localises to the secreted. Its subcellular location is the cell wall. It is found in the cell membrane. Carbohydrate binding protein that binds chitin and cellulose. Lacks enzymatic activity and does not hydrolyze chitin and cellulose. May interact with mycobacterial biofilms, which are rich in cellulose, and play a role in biofilm formation. Could also act as an adhesin, improving the initial attachment to host cells and aiding M.bovis during the initial stages of infection. In terms of biological role, may act as a virulence factor that modulates host immune responses and contributes to host immune evasion. The polypeptide is Cellulose/chitin binding protein BQ2027_MB2009 (Mycobacterium bovis (strain ATCC BAA-935 / AF2122/97)).